The sequence spans 467 residues: Amino-acid permease RocE (467 aa).

12 helical membrane-spanning segments follow: residues 21–41 (FMIS…GFTI), 47–67 (LGAV…MLCL), 87–107 (FISP…WAVT), 122–142 (WFPH…MFIL), 162–182 (ILII…LIDL), 207–227 (MLIT…IGVA), 246–266 (VWRT…MIPW), 283–303 (IGIP…LLSV), 336–356 (VPMY…LTKF), 361–381 (TVYM…WITI), 409–429 (YPVL…SLAF), and 435–455 (IALY…HVVI).

Belongs to the amino acid-polyamine-organocation (APC) superfamily. Amino acid transporter (AAT) (TC 2.A.3.1) family.

The protein localises to the cell membrane. Putative transport protein involved in arginine degradative pathway. Probably transports arginine or ornithine. This is Amino-acid permease RocE from Bacillus subtilis (strain 168).